The sequence spans 118 residues: Small ribosomal subunit protein uS13 (118 aa).

A disordered region spans residues 91-118; sequence HRRSLPVRGQRTKTNARTRKGPRKPIKA.

Belongs to the universal ribosomal protein uS13 family. In terms of assembly, part of the 30S ribosomal subunit. Forms a loose heterodimer with protein S19. Forms two bridges to the 50S subunit in the 70S ribosome.

Located at the top of the head of the 30S subunit, it contacts several helices of the 16S rRNA. In the 70S ribosome it contacts the 23S rRNA (bridge B1a) and protein L5 of the 50S subunit (bridge B1b), connecting the 2 subunits; these bridges are implicated in subunit movement. Contacts the tRNAs in the A and P-sites. This is Small ribosomal subunit protein uS13 from Francisella tularensis subsp. tularensis (strain FSC 198).